A 403-amino-acid polypeptide reads, in one-letter code: DNA polymerase IV (403 aa).

The 181-residue stretch at 23 to 203 (IAHMDCDAFY…KPVNILPGVG (181 aa)) folds into the UmuC domain. Mg(2+)-binding residues include aspartate 27 and aspartate 120. Glutamate 121 is a catalytic residue.

The protein belongs to the DNA polymerase type-Y family. In terms of assembly, monomer. Mg(2+) is required as a cofactor.

Its subcellular location is the cytoplasm. The catalysed reaction is DNA(n) + a 2'-deoxyribonucleoside 5'-triphosphate = DNA(n+1) + diphosphate. Functionally, poorly processive, error-prone DNA polymerase involved in untargeted mutagenesis. Copies undamaged DNA at stalled replication forks, which arise in vivo from mismatched or misaligned primer ends. These misaligned primers can be extended by PolIV. Exhibits no 3'-5' exonuclease (proofreading) activity. May be involved in translesional synthesis, in conjunction with the beta clamp from PolIII. This is DNA polymerase IV from Caulobacter vibrioides (strain ATCC 19089 / CIP 103742 / CB 15) (Caulobacter crescentus).